Here is a 130-residue protein sequence, read N- to C-terminus: Hypocretin neuropeptide precursor (130 aa).

A signal peptide spans 1 to 32; that stretch reads MNFPSTKVPWAAVTLLLLLLLPPALLSLGVDA. Gln33 is subject to Pyrrolidone carboxylic acid. 2 disulfides stabilise this stretch: Cys38–Cys44 and Cys39–Cys46. Leu65 is modified (leucine amide). Met96 bears the Methionine amide mark. The propeptide occupies 97–130; it reads GRRAGAELEPHPCSGRGCPTVTTTALAPRGGSGV.

The protein belongs to the orexin family. In terms of processing, specific enzymatic cleavages at paired basic residues yield the different active peptides. Restricted to neuronal cell bodies of the dorsal and lateral hypothalamus.

Its subcellular location is the rough endoplasmic reticulum. The protein localises to the cytoplasmic vesicle. It is found in the synapse. Neuropeptides that play a significant role in the regulation of food intake and sleep-wakefulness, possibly by coordinating the complex behavioral and physiologic responses of these complementary homeostatic functions. A broader role in the homeostatic regulation of energy metabolism, autonomic function, hormonal balance and the regulation of body fluids, is also suggested. Its function is as follows. Binds to orexin receptors HCRTR1/OX1R and HCRTR2/OX2R with a high affinity. Stimulates food intake. Modulates pituitary luteinizing hormone secretion in an ovarian steroid-dependent manner. In terms of biological role, binds to orexin receptor HCRTR2/OX2R only. Stimulates food intake. Modulates pituitary luteinizing hormone secretion in an ovarian steroid-dependent manner. This is Hypocretin neuropeptide precursor (Hcrt) from Mus musculus (Mouse).